The sequence spans 120 residues: Dihydroneopterin triphosphate 2'-epimerase (120 aa).

This sequence belongs to the DHNA family. Homooctamer.

The enzyme catalyses 7,8-dihydroneopterin 3'-triphosphate = 7,8-dihydromonapterin 3'-triphosphate. Its function is as follows. Catalyzes the epimerization of carbon 2' of the side chain of 7,8-dihydroneopterin triphosphate (H2NTP) to form 7,8-dihydromonapterin triphosphate (H2MTP). Is required for tetrahydromonapterin biosynthesis. In Escherichia coli O157:H7, this protein is Dihydroneopterin triphosphate 2'-epimerase (folX).